We begin with the raw amino-acid sequence, 280 residues long: Probable endonuclease 4 (280 aa).

Positions 69, 109, 145, 179, 182, 216, 229, 231, and 261 each coordinate Zn(2+).

The protein belongs to the AP endonuclease 2 family. Zn(2+) is required as a cofactor.

It carries out the reaction Endonucleolytic cleavage to 5'-phosphooligonucleotide end-products.. Functionally, endonuclease IV plays a role in DNA repair. It cleaves phosphodiester bonds at apurinic or apyrimidinic (AP) sites, generating a 3'-hydroxyl group and a 5'-terminal sugar phosphate. This Actinobacillus pleuropneumoniae serotype 5b (strain L20) protein is Probable endonuclease 4.